The sequence spans 309 residues: uncharacterized protein (309 aa).

6 helical membrane passes run Ile28 to Pro48, Met73 to Trp93, Leu113 to Ile133, Ile157 to Ser177, Phe220 to Phe240, and Ile259 to Leu279.

Its subcellular location is the cell membrane. This is an uncharacterized protein from Bacillus subtilis (strain 168).